Consider the following 194-residue polypeptide: Peptidyl-tRNA hydrolase (194 aa).

Tyrosine 17 lines the tRNA pocket. Histidine 22 functions as the Proton acceptor in the catalytic mechanism. TRNA-binding residues include tyrosine 68, asparagine 70, and asparagine 115.

It belongs to the PTH family. Monomer.

Its subcellular location is the cytoplasm. It carries out the reaction an N-acyl-L-alpha-aminoacyl-tRNA + H2O = an N-acyl-L-amino acid + a tRNA + H(+). Functionally, hydrolyzes ribosome-free peptidyl-tRNAs (with 1 or more amino acids incorporated), which drop off the ribosome during protein synthesis, or as a result of ribosome stalling. In terms of biological role, catalyzes the release of premature peptidyl moieties from peptidyl-tRNA molecules trapped in stalled 50S ribosomal subunits, and thus maintains levels of free tRNAs and 50S ribosomes. This is Peptidyl-tRNA hydrolase from Pseudoalteromonas atlantica (strain T6c / ATCC BAA-1087).